The primary structure comprises 171 residues: Myosin regulatory light chain 12A (171 aa).

Position 18 is a phosphothreonine; by MLCK (T18). Residue S19 is modified to Phosphoserine; by MLCK. EF-hand domains follow at residues 28–63, 97–132, and 133–168; these read SQIQEFKEAFNMIDQNRDGFIDKEDLHDMLASLGKN, DPEDVIRNAFACFDEEATGTIQEDYLRELLTTMGDR, and FTDEEVDELYREAPIDKKGNFNYIEFTRILKHGAKD. Ca(2+) is bound by residues D41, N43, D45, and D52.

As to quaternary structure, myosin is a hexamer of 2 heavy chains and 4 light chains. In terms of processing, phosphorylation increases the actin-activated myosin ATPase activity and thereby regulates the contractile activity. It is required to generate the driving force in the migration of the cells but not necessary for localization of myosin-2 at the leading edge.

Myosin regulatory subunit that plays an important role in regulation of both smooth muscle and nonmuscle cell contractile activity via its phosphorylation. Implicated in cytokinesis, receptor capping, and cell locomotion. This Homo sapiens (Human) protein is Myosin regulatory light chain 12A (MYL12A).